A 221-amino-acid chain; its full sequence is Thiamine-phosphate synthase (221 aa).

Residues 44–48 and Asn80 each bind 4-amino-2-methyl-5-(diphosphooxymethyl)pyrimidine; that span reads QLRLK. Residues Asp81 and Asp100 each coordinate Mg(2+). Thr119 is a 4-amino-2-methyl-5-(diphosphooxymethyl)pyrimidine binding site. Residue 146–148 coordinates 2-[(2R,5Z)-2-carboxy-4-methylthiazol-5(2H)-ylidene]ethyl phosphate; sequence TTT. Lys149 is a 4-amino-2-methyl-5-(diphosphooxymethyl)pyrimidine binding site. 2-[(2R,5Z)-2-carboxy-4-methylthiazol-5(2H)-ylidene]ethyl phosphate is bound at residue Gly176.

It belongs to the thiamine-phosphate synthase family. Requires Mg(2+) as cofactor.

It carries out the reaction 2-[(2R,5Z)-2-carboxy-4-methylthiazol-5(2H)-ylidene]ethyl phosphate + 4-amino-2-methyl-5-(diphosphooxymethyl)pyrimidine + 2 H(+) = thiamine phosphate + CO2 + diphosphate. The enzyme catalyses 2-(2-carboxy-4-methylthiazol-5-yl)ethyl phosphate + 4-amino-2-methyl-5-(diphosphooxymethyl)pyrimidine + 2 H(+) = thiamine phosphate + CO2 + diphosphate. It catalyses the reaction 4-methyl-5-(2-phosphooxyethyl)-thiazole + 4-amino-2-methyl-5-(diphosphooxymethyl)pyrimidine + H(+) = thiamine phosphate + diphosphate. Its pathway is cofactor biosynthesis; thiamine diphosphate biosynthesis; thiamine phosphate from 4-amino-2-methyl-5-diphosphomethylpyrimidine and 4-methyl-5-(2-phosphoethyl)-thiazole: step 1/1. In terms of biological role, condenses 4-methyl-5-(beta-hydroxyethyl)thiazole monophosphate (THZ-P) and 2-methyl-4-amino-5-hydroxymethyl pyrimidine pyrophosphate (HMP-PP) to form thiamine monophosphate (TMP). This chain is Thiamine-phosphate synthase, found in Hyphomonas neptunium (strain ATCC 15444).